A 525-amino-acid chain; its full sequence is MELTLWTYEGPPHIGAMRIATSMKKLHYVLHAPQGDTYADLLFTMIERRGSRPPVTYTTFQARDLGGDTAELVKGHIKEAVDRFKPETLLVGESCTAELIQDQPGSLAKGMGFDIPIVSLELPAYSKKENWGGSETFYQIVRTLLKDHSNESKHTWQEEKRRPRVNLLGPTLLGFRCRDDVLEIQKLLGQYGIDVNVVAPLGASPADILRIPNADVNVCLYPEIAESTCIWLERNLNIPFTTTVPLGVGATQDFLKELHKVLEMEIPQSVNESNNSKLTWYSNSVDSNYLTGKRVFIFGDGTHALAAARIANEELGFKVVGLGTYSREMARKVRPAAKALGLEALITNDYLEVEDAIKETSPELVLGTQMERHSAKRLGIPCAVISTPMHVQDVPARYSPQMGWEGANVIFDDWVHPLMMGLEEHLIGMFKHDFEFVDGHQSHLGHLGGKGTQNTNKEAIKTNLQDSVITDSDPIWTHEGEKELSKIPFFVRGKVRRNTENYARQAGCREINEETLYDAKAHYKA.

Asp36 contacts [4Fe-4S] cluster. Residue Asp286 is the Proton donor of the active site. 421–422 (GL) is a substrate binding site.

This sequence belongs to the ChlB/BchB/BchZ family. In terms of assembly, protochlorophyllide reductase is composed of three subunits; ChlL, ChlN and ChlB. Forms a heterotetramer of two ChlB and two ChlN subunits. It depends on [4Fe-4S] cluster as a cofactor.

The enzyme catalyses chlorophyllide a + oxidized 2[4Fe-4S]-[ferredoxin] + 2 ADP + 2 phosphate = protochlorophyllide a + reduced 2[4Fe-4S]-[ferredoxin] + 2 ATP + 2 H2O. The protein operates within porphyrin-containing compound metabolism; chlorophyll biosynthesis (light-independent). Its function is as follows. Component of the dark-operative protochlorophyllide reductase (DPOR) that uses Mg-ATP and reduced ferredoxin to reduce ring D of protochlorophyllide (Pchlide) to form chlorophyllide a (Chlide). This reaction is light-independent. The NB-protein (ChlN-ChlB) is the catalytic component of the complex. This chain is Light-independent protochlorophyllide reductase subunit B, found in Prochlorococcus marinus (strain NATL2A).